The following is a 337-amino-acid chain: Glyceraldehyde-3-phosphate dehydrogenase 1, cytosolic (337 aa).

A binding to NAD region spans residues 1–151 (MGKIKIGING…YTSDVNIVSN (151 aa)). NAD(+) is bound by residues 13–14 (RI), aspartate 35, and arginine 82. The catalytic stretch occupies residues 152 to 337 (ASCTTNCLAP…DLIRHMFKTQ (186 aa)). Residues 153–155 (SCT), threonine 184, 213–214 (TG), and arginine 236 each bind D-glyceraldehyde 3-phosphate. Cysteine 154 serves as the catalytic Nucleophile. Asparagine 318 contributes to the NAD(+) binding site.

Belongs to the glyceraldehyde-3-phosphate dehydrogenase family. In terms of assembly, homotetramer.

The protein localises to the cytoplasm. It catalyses the reaction D-glyceraldehyde 3-phosphate + phosphate + NAD(+) = (2R)-3-phospho-glyceroyl phosphate + NADH + H(+). It participates in carbohydrate degradation; glycolysis; pyruvate from D-glyceraldehyde 3-phosphate: step 1/5. In terms of biological role, key enzyme in glycolysis that catalyzes the first step of the pathway by converting D-glyceraldehyde 3-phosphate (G3P) into 3-phospho-D-glyceroyl phosphate. Essential for the maintenance of cellular ATP levels and carbohydrate metabolism. In Zea mays (Maize), this protein is Glyceraldehyde-3-phosphate dehydrogenase 1, cytosolic (GAPC1).